The chain runs to 119 residues: Hydrogenase maturation factor HypA (119 aa).

Position 2 (His-2) interacts with Ni(2+). Zn(2+) contacts are provided by Cys-73, Cys-76, Cys-89, and Cys-92.

Belongs to the HypA/HybF family.

Functionally, involved in the maturation of [NiFe] hydrogenases. Required for nickel insertion into the metal center of the hydrogenase. In Cupriavidus necator (strain ATCC 17699 / DSM 428 / KCTC 22496 / NCIMB 10442 / H16 / Stanier 337) (Ralstonia eutropha), this protein is Hydrogenase maturation factor HypA.